We begin with the raw amino-acid sequence, 165 residues long: 3-isopropylmalate dehydratase small subunit 2 (165 aa).

Belongs to the LeuD family. LeuD type 2 subfamily. In terms of assembly, heterodimer of LeuC and LeuD.

The catalysed reaction is (2R,3S)-3-isopropylmalate = (2S)-2-isopropylmalate. Its pathway is amino-acid biosynthesis; L-leucine biosynthesis; L-leucine from 3-methyl-2-oxobutanoate: step 2/4. Functionally, catalyzes the isomerization between 2-isopropylmalate and 3-isopropylmalate, via the formation of 2-isopropylmaleate. The sequence is that of 3-isopropylmalate dehydratase small subunit 2 (leuD2) from Archaeoglobus fulgidus (strain ATCC 49558 / DSM 4304 / JCM 9628 / NBRC 100126 / VC-16).